We begin with the raw amino-acid sequence, 131 residues long: Fluoride-specific ion channel FluC 2 (131 aa).

The next 4 membrane-spanning stretches (helical) occupy residues 5–25, 35–55, 59–79, and 95–115; these read SAVF…NLWI, WLEN…FMIG, PLLS…MSTF, and LLYV…GVFV. Positions 71 and 74 each coordinate Na(+).

The protein belongs to the fluoride channel Fluc/FEX (TC 1.A.43) family.

The protein resides in the cell membrane. It carries out the reaction fluoride(in) = fluoride(out). Na(+) is not transported, but it plays an essential structural role and its presence is essential for fluoride channel function. Its function is as follows. Fluoride-specific ion channel. Important for reducing fluoride concentration in the cell, thus reducing its toxicity. In Bacillus subtilis (strain 168), this protein is Fluoride-specific ion channel FluC 2.